The primary structure comprises 426 residues: Multifunctional protein ADE2 (426 aa).

The segment at 1–261 (MAPAASELKL…WVAERVELLL (261 aa)) is SAICAR synthetase. An AIR carboxylase region spans residues 262–426 (KTKSQGRVVV…ADKKLRECTL (165 aa)).

The protein in the N-terminal section; belongs to the SAICAR synthetase family. It in the C-terminal section; belongs to the AIR carboxylase family. Class II subfamily. In terms of assembly, homooctamer.

The enzyme catalyses 5-amino-1-(5-phospho-D-ribosyl)imidazole-4-carboxylate + L-aspartate + ATP = (2S)-2-[5-amino-1-(5-phospho-beta-D-ribosyl)imidazole-4-carboxamido]succinate + ADP + phosphate + 2 H(+). The catalysed reaction is 5-amino-1-(5-phospho-D-ribosyl)imidazole-4-carboxylate + H(+) = 5-amino-1-(5-phospho-beta-D-ribosyl)imidazole + CO2. The protein operates within purine metabolism; IMP biosynthesis via de novo pathway; 5-amino-1-(5-phospho-D-ribosyl)imidazole-4-carboxamide from 5-amino-1-(5-phospho-D-ribosyl)imidazole-4-carboxylate: step 1/2. It functions in the pathway purine metabolism; IMP biosynthesis via de novo pathway; 5-amino-1-(5-phospho-D-ribosyl)imidazole-4-carboxylate from 5-amino-1-(5-phospho-D-ribosyl)imidazole (carboxylase route): step 1/1. The polypeptide is Multifunctional protein ADE2 (AIRC) (Gallus gallus (Chicken)).